Here is a 179-residue protein sequence, read N- to C-terminus: Avenin-like a2 (179 aa).

The signal sequence occupies residues 1–19; sequence MKTMFLLALLAFTATSAVA.

It belongs to the prolamin family. Contains 7 disulfide bonds.

Functionally, seed storage protein. Not integrated in the gluten polymer through disulfide bonds, unless incorporated by reduction and reoxidation during dough making. Increases dough strength and bread volume, but decreases dough stability when added into a base wheat flour. The protein is Avenin-like a2 of Triticum aestivum (Wheat).